The following is a 432-amino-acid chain: Trigger factor (432 aa).

The PPIase FKBP-type domain maps to 161–246 (DDRVTIDFVG…LKKIENMVLP (86 aa)).

It belongs to the FKBP-type PPIase family. Tig subfamily.

The protein resides in the cytoplasm. It catalyses the reaction [protein]-peptidylproline (omega=180) = [protein]-peptidylproline (omega=0). Functionally, involved in protein export. Acts as a chaperone by maintaining the newly synthesized protein in an open conformation. Functions as a peptidyl-prolyl cis-trans isomerase. In Haemophilus influenzae (strain ATCC 51907 / DSM 11121 / KW20 / Rd), this protein is Trigger factor (tig).